The following is a 503-amino-acid chain: Alpha-1-syntrophin (503 aa).

PH domains follow at residues 6-263 (RAPR…AQIG) and 287-399 (DIKQ…DGCH). A disordered region spans residues 40 to 68 (LTVSPADGEPGPEPEPAQLNGAAEPGAAP). In terms of domain architecture, PDZ spans 81 to 164 (RVTVRKADAG…EVVLEVKYMK (84 aa)). Serine 95, serine 178, serine 183, serine 187, and serine 194 each carry phosphoserine. The interval 177-203 (TSVGWDSPPASPLQRQPSSPGPQPRNL) is disordered. The SU domain maps to 447–503 (PFEKLQMSSDDGTSLLFLDFGGAEGEIQLDLHSCPKTMVFIIHSFLSAKVTRLGLLA). The interval 481–503 (PKTMVFIIHSFLSAKVTRLGLLA) is calmodulin-binding.

Belongs to the syntrophin family. As to quaternary structure, monomer and homodimer. Interacts with MAPK12, TGFA, GA and F-actin. Interacts with the other members of the syntrophin family: SNTB1 and SNTB2; with dystrophin protein DMD and related proteins DTNA and UTRN; SGCG and SGCA of the dystrophin glycoprotein complex; NOS1; GRB2; calmodulin and the sodium channel proteins SCN4A and SCN5A. Interacts with MYOC; regulates muscle hypertrophy. Interacts with DTNB. In terms of processing, phosphorylated by CaM-kinase II. Phosphorylation may inhibit the interaction with DMD. In terms of tissue distribution, high expression in skeletal muscle. Expressed at intermediate level in heart, kidney and brain, and at low level in intestine, liver, lung and testis.

The protein resides in the cell membrane. Its subcellular location is the sarcolemma. It localises to the cell junction. It is found in the cytoplasm. The protein localises to the cytoskeleton. Adapter protein that binds to and probably organizes the subcellular localization of a variety of membrane proteins. May link various receptors to the actin cytoskeleton and the extracellular matrix via the dystrophin glycoprotein complex. Plays an important role in synapse formation and in the organization of UTRN and acetylcholine receptors at the neuromuscular synapse. Binds to phosphatidylinositol 4,5-bisphosphate. The protein is Alpha-1-syntrophin (Snta1) of Mus musculus (Mouse).